A 187-amino-acid chain; its full sequence is dCTP deaminase, dUMP-forming (187 aa).

DCTP is bound by residues 101-106 (KSSLGR) and D119. E129 functions as the Proton donor/acceptor in the catalytic mechanism. The dCTP site is built by Q148, Y162, and Q174.

The protein belongs to the dCTP deaminase family. As to quaternary structure, homotrimer.

It carries out the reaction dCTP + 2 H2O = dUMP + NH4(+) + diphosphate. Its pathway is pyrimidine metabolism; dUMP biosynthesis; dUMP from dCTP: step 1/1. Bifunctional enzyme that catalyzes both the deamination of dCTP to dUTP and the hydrolysis of dUTP to dUMP without releasing the toxic dUTP intermediate. This is dCTP deaminase, dUMP-forming from Corynebacterium kroppenstedtii (strain DSM 44385 / JCM 11950 / CIP 105744 / CCUG 35717).